The sequence spans 208 residues: Holliday junction branch migration complex subunit RuvA (208 aa).

The interval M1 to L63 is domain I. The domain II stretch occupies residues D64–Q142. Residues A143 to D151 form a flexible linker region. The interval D151–R208 is domain III.

Belongs to the RuvA family. As to quaternary structure, homotetramer. Forms an RuvA(8)-RuvB(12)-Holliday junction (HJ) complex. HJ DNA is sandwiched between 2 RuvA tetramers; dsDNA enters through RuvA and exits via RuvB. An RuvB hexamer assembles on each DNA strand where it exits the tetramer. Each RuvB hexamer is contacted by two RuvA subunits (via domain III) on 2 adjacent RuvB subunits; this complex drives branch migration. In the full resolvosome a probable DNA-RuvA(4)-RuvB(12)-RuvC(2) complex forms which resolves the HJ.

It is found in the cytoplasm. The RuvA-RuvB-RuvC complex processes Holliday junction (HJ) DNA during genetic recombination and DNA repair, while the RuvA-RuvB complex plays an important role in the rescue of blocked DNA replication forks via replication fork reversal (RFR). RuvA specifically binds to HJ cruciform DNA, conferring on it an open structure. The RuvB hexamer acts as an ATP-dependent pump, pulling dsDNA into and through the RuvAB complex. HJ branch migration allows RuvC to scan DNA until it finds its consensus sequence, where it cleaves and resolves the cruciform DNA. This Bifidobacterium longum (strain DJO10A) protein is Holliday junction branch migration complex subunit RuvA.